A 1286-amino-acid polypeptide reads, in one-letter code: Protein patched (1286 aa).

Residues Met1–Lys76 are Cytoplasmic-facing. Residues Val77–Leu92 form a helical membrane-spanning segment. Topologically, residues Lys93–Pro427 are extracellular. Asn142, Asn298, Asn335, and Asn388 each carry an N-linked (GlcNAc...) asparagine glycan. Residues Ser428 to Leu448 form a helical membrane-spanning segment. Residues Ser428–Leu583 form the SSD domain. Over Arg449–Val465 the chain is Cytoplasmic. Residues Leu466–Phe486 traverse the membrane as a helical segment. Residues Asn487–Gln492 lie on the Extracellular side of the membrane. Residues Val493–Ala511 traverse the membrane as a helical segment. The Cytoplasmic portion of the chain corresponds to Ala512–Ser532. Residues Ile533–Pro553 form a helical membrane-spanning segment. Topologically, residues Ala554–Ala562 are extracellular. A helical membrane pass occupies residues Ala563–Leu583. Residues Asp584–Ser677 lie on the Cytoplasmic side of the membrane. Residues Trp678 to Thr699 form a helical membrane-spanning segment. Topologically, residues Arg700–Gly931 are extracellular. N-linked (GlcNAc...) asparagine glycosylation is present at Asn807. A helical membrane pass occupies residues Phe932–Leu952. The Cytoplasmic portion of the chain corresponds to Arg953–Ser955. The chain crosses the membrane as a helical span at residues Leu956–Leu976. Residues Ser977 to Ser1007 are Extracellular-facing. A helical membrane pass occupies residues Ala1008 to Ile1028. Residues Ser1029 to His1056 lie on the Cytoplasmic side of the membrane. The chain crosses the membrane as a helical span at residues Gly1057 to Ile1077. The Extracellular segment spans residues Arg1078–Trp1082. The chain crosses the membrane as a helical span at residues Leu1083–Leu1103. Residues Ser1104–Ser1286 lie on the Cytoplasmic side of the membrane. The interval Glu1116–Pro1237 is disordered. Polar residues-rich tracts occupy residues Val1141–Gln1152 and Pro1165–Thr1191. Residues Pro1199 to Gln1216 are compositionally biased toward low complexity. Residues Pro1224–Tyr1235 are compositionally biased toward pro residues.

It belongs to the patched family. As to quaternary structure, interacts (via C-terminal cytoplasmic region) with CG5504/l(2)tid; the interaction is probably direct. Interacts with hh/hedgehog.

The protein resides in the membrane. Functionally, segmentation polarity protein. Acts as a receptor for the hedgehog protein (hh). Associates with the smoothened protein (SMO) to transduce the hedgehog signal leading to the activation of wingless, decapentaplegic and patched itself. Participates in cell interactions that establish pattern within the segment and the imaginal disks during development. In the absence of HH, represses the constitutive signaling activity of smo through fused (FU). The sequence is that of Protein patched from Drosophila melanogaster (Fruit fly).